We begin with the raw amino-acid sequence, 190 residues long: Ribose 1,5-bisphosphate phosphokinase PhnN (190 aa).

11-18 (GPSGSGKD) provides a ligand contact to ATP.

Belongs to the ribose 1,5-bisphosphokinase family.

The enzyme catalyses alpha-D-ribose 1,5-bisphosphate + ATP = 5-phospho-alpha-D-ribose 1-diphosphate + ADP. It functions in the pathway metabolic intermediate biosynthesis; 5-phospho-alpha-D-ribose 1-diphosphate biosynthesis; 5-phospho-alpha-D-ribose 1-diphosphate from D-ribose 5-phosphate (route II): step 3/3. Its function is as follows. Catalyzes the phosphorylation of ribose 1,5-bisphosphate to 5-phospho-D-ribosyl alpha-1-diphosphate (PRPP). This is Ribose 1,5-bisphosphate phosphokinase PhnN from Thiobacillus denitrificans (strain ATCC 25259 / T1).